The following is a 194-amino-acid chain: GTP cyclohydrolase 1 (194 aa).

Zn(2+) contacts are provided by cysteine 83, histidine 86, and cysteine 155.

It belongs to the GTP cyclohydrolase I family. Toroid-shaped homodecamer, composed of two pentamers of five dimers.

It carries out the reaction GTP + H2O = 7,8-dihydroneopterin 3'-triphosphate + formate + H(+). It participates in cofactor biosynthesis; 7,8-dihydroneopterin triphosphate biosynthesis; 7,8-dihydroneopterin triphosphate from GTP: step 1/1. The chain is GTP cyclohydrolase 1 (folE) from Streptococcus pyogenes.